The primary structure comprises 579 residues: Arginine--tRNA ligase (579 aa).

The short motif at 123 to 133 (PNLAKEMHVGH) is the 'HIGH' region element.

It belongs to the class-I aminoacyl-tRNA synthetase family. As to quaternary structure, monomer.

The protein resides in the cytoplasm. It carries out the reaction tRNA(Arg) + L-arginine + ATP = L-arginyl-tRNA(Arg) + AMP + diphosphate. This Saccharophagus degradans (strain 2-40 / ATCC 43961 / DSM 17024) protein is Arginine--tRNA ligase.